Consider the following 335-residue polypeptide: MAEKIAVIGAGSWGTTLADLLAKKGHEVTLWAYEPELVLEMRDTRENSLFLPGIKLNEGLAFTNDLAQAYRGCSMVLCVVPSQLVRRVMTNSLPFLPREAVIVSASKGIEVDTLATVSEIYQEILPPEQYRNLAALSGPSFAREVALEMPTAVTAAASTEAVARRVQEAFTTSYFRVYRNSDVVGVELGGAIKNVIAIAAGISDGLGFGSNTRAALITRGLAEMTRLGVAMGAQPSTFAGLAGMGDLVLTCTGDLSRNRSVGIQIGQGRTLSEILGEMRMVAEGVKTTESAYNLAKKLGVEMPIIEQMYQMLYQSKPAREAVLELMTRNLKAEGV.

3 residues coordinate NADPH: Ser12, Trp13, and Lys107. Positions 107, 138, and 140 each coordinate sn-glycerol 3-phosphate. Residue Ala142 coordinates NADPH. Sn-glycerol 3-phosphate is bound by residues Lys193, Asp246, Ser256, Arg257, and Asn258. The active-site Proton acceptor is Lys193. Arg257 provides a ligand contact to NADPH. Val281 and Glu283 together coordinate NADPH.

The protein belongs to the NAD-dependent glycerol-3-phosphate dehydrogenase family.

The protein resides in the cytoplasm. It carries out the reaction sn-glycerol 3-phosphate + NAD(+) = dihydroxyacetone phosphate + NADH + H(+). The enzyme catalyses sn-glycerol 3-phosphate + NADP(+) = dihydroxyacetone phosphate + NADPH + H(+). Its pathway is membrane lipid metabolism; glycerophospholipid metabolism. Functionally, catalyzes the reduction of the glycolytic intermediate dihydroxyacetone phosphate (DHAP) to sn-glycerol 3-phosphate (G3P), the key precursor for phospholipid synthesis. The protein is Glycerol-3-phosphate dehydrogenase [NAD(P)+] of Geobacter sp. (strain M21).